Reading from the N-terminus, the 142-residue chain is Small ribosomal subunit protein uS12 (142 aa).

This sequence belongs to the universal ribosomal protein uS12 family. In terms of assembly, part of the 30S ribosomal subunit.

In terms of biological role, with S4 and S5 plays an important role in translational accuracy. Located at the interface of the 30S and 50S subunits. This Thermoplasma acidophilum (strain ATCC 25905 / DSM 1728 / JCM 9062 / NBRC 15155 / AMRC-C165) protein is Small ribosomal subunit protein uS12.